The sequence spans 489 residues: Cytochrome P450 302a1, mitochondrial (489 aa).

Cys-434 provides a ligand contact to heme.

This sequence belongs to the cytochrome P450 family. The cofactor is heme. Complex coexpression pattern of dib (disembodied) and sad (shade) in the early embryo that restricts to the prothoracic gland cells of the developing ring gland during late embryogenesis. In larvae and adult, coexpression is seen in prothoracic gland and follicle cells of the ovary. In adults, coexpression is seen in the follicle cells.

Its subcellular location is the mitochondrion membrane. The catalysed reaction is 2,22-dideoxyecdysone + 2 reduced [adrenodoxin] + O2 + 2 H(+) = 2-deoxyecdysone + 2 oxidized [adrenodoxin] + H2O. The protein operates within steroid biosynthesis; ecdysteroid biosynthesis. Functionally, required for CNS development; negatively regulates glial cell division in the embryonic midline. Involved in the metabolism of insect hormones; responsible for ecdysteroid C22-hydroxylase activity. May be involved in the breakdown of synthetic insecticides. The polypeptide is Cytochrome P450 302a1, mitochondrial (Drosophila melanogaster (Fruit fly)).